The sequence spans 873 residues: Potassium voltage-gated channel subfamily KQT member 3 (873 aa).

The disordered stretch occupies residues 1–41 (MGLKARRAAGAAGGGGGEGGGGGGGAANPAGGDSAVAGDEE). Residues 1–121 (MGLKARRAAG…IYDALERPRG (121 aa)) are Cytoplasmic-facing. Positions 11–26 (AAGGGGGEGGGGGGGA) are enriched in gly residues. Position 82 is a phosphothreonine (Thr-82). A helical transmembrane segment spans residues 122–144 (WALLYHALVFLIVLGCLILAVLT). Residues 145–154 (TFKEYETVSG) lie on the Extracellular side of the membrane. Residues 155 to 176 (DWLLLLETFAIFIFGAEFALRI) form a helical membrane-spanning segment. At 177-194 (WAAGCCCRYKGWRGRLKF) the chain is on the cytoplasmic side. A helical membrane pass occupies residues 195-214 (ARKPLCMLDIFVLIASVPVV). At 215 to 226 (AVGNQGNVLATS) the chain is on the extracellular side. The helical; Voltage-sensor transmembrane segment at 227–245 (LRSLRFLQILRMLRMDRRG) threads the bilayer. A 1,2-diacyl-sn-glycero-3-phospho-(1D-myo-inositol-4,5-bisphosphate) is bound at residue Arg-244. Residues 246–257 (GTWKLLGSAICA) lie on the Cytoplasmic side of the membrane. The helical transmembrane segment at 258–283 (HSKELITAWYIGFLTLILSSFLVYLV) threads the bilayer. Position 260 (Lys-260) interacts with a 1,2-diacyl-sn-glycero-3-phospho-(1D-myo-inositol-4,5-bisphosphate). At 284 to 303 (EKDVPEMDAQGEEMKEEFET) the chain is on the extracellular side. An intramembrane region (pore-forming) is located at residues 304-316 (YADALWWGLITLA). Residues 317–322 (TIGYGD) carry the Selectivity filter motif. Topologically, residues 317 to 327 (TIGYGDKTPKT) are extracellular. Residues 328–354 (WEGRLIAATFSLIGVSFFALPAGILGS) traverse the membrane as a helical segment. Residues 355–873 (GLALKVQEQH…SIWTPSNKPT (519 aa)) are Cytoplasmic-facing. The mediates interaction with calmodulin stretch occupies residues 357 to 538 (ALKVQEQHRQ…RLYKKKFKET (182 aa)). Lys-367 contributes to the a 1,2-diacyl-sn-glycero-3-phospho-(1D-myo-inositol-4,5-bisphosphate) binding site. 3 disordered regions span residues 575 to 603 (PGPP…PRNE), 723 to 742 (RGGP…GSTY), and 766 to 873 (ELQG…NKPT). Composition is skewed to polar residues over residues 588–601 (KGSA…QSPR), 725–741 (GPSS…SGST), and 844–873 (DPFT…NKPT).

This sequence belongs to the potassium channel family. KQT (TC 1.A.1.15) subfamily. Kv7.3/KCNQ3 sub-subfamily. Heterotetramer with KCNQ2; forms heterotetrameric M-channel responsible for the native M-current. Interacts with calmodulin; the interaction is calcium-independent, constitutive and participates in the proper assembly of a functional M-channel. Heteromultimer with KCNQ5. May associate with KCNE2. Interacts with IQCJ-SCHIP1. Interacts (via the pore module) with SLC5A3/SMIT1; forms a coregulatory complex that alters ion selectivity, voltage dependence and gating kinetics of the channel. Post-translationally, KCNQ2/KCNQ3 are ubiquitinated by NEDD4L. Ubiquitination leads to protein degradation. Degradation induced by NEDD4L is inhibited by USP36. As to expression, expressed in brain and sympathetic ganglia. In brain, expressed in cortex, hippocampus and at much lower levels in cerebellum. In sympathetic ganglia, expressed at approximately equal levels in both superior cervical ganglia and prevertebral ganglia.

It is found in the cell membrane. The catalysed reaction is K(+)(in) = K(+)(out). The enzyme catalyses Rb(+)(in) = Rb(+)(out). It catalyses the reaction Cs(+)(in) = Cs(+)(out). It carries out the reaction Na(+)(in) = Na(+)(out). Its activity is regulated as follows. Phosphatidylinositol-4,5-bisphosphate (PIP2) potentiates the activation of KCNQ channels by enhancing the electro-mechanical coupling of the voltage-sensing domain (VSD) and the pore-forming domain (PD). In the closed state of the channel, PIP2 is anchored at the S2-S3 loop; upon channel activation, PIP2 interacts with the S4-S5 linker and is involved in channel gating. Calcium suppresses KCNQ2-KCNQ3 channel currents, with calcium-bound calmodulin inducing a change in channel configuration which leads to the reduction of channel affinity for PIP2 and subsequent current suppression. M-channel is blocked by XE991. In terms of biological role, pore-forming subunit of the voltage-gated potassium (Kv) M-channel which is responsible for the M-current, a key controller of neuronal excitability. M-channel is composed of pore-forming subunits KCNQ2 and KCNQ3 assembled as heterotetramers, each subunit containing a voltage sensing domain (VSD) and a pore-forming domain (PD). The native M-current has a slowly activating and deactivating potassium conductance which plays a critical role in determining the subthreshold electrical excitability of neurons as well as the responsiveness to synaptic inputs. M-channel is selectively permeable in vitro to other cations besides potassium, in decreasing order of affinity K(+) &gt; Rb(+) &gt; Cs(+) &gt; Na(+). M-channel association with SLC5A3/SMIT1 alters channel ion selectivity, increasing Na(+) and Cs(+) permeation relative to K(+). Suppressed by activation of M1 muscarinic acetylcholine receptors. KCNQ3 also associates with KCNQ5 to form a functional channel in vitro and may also contribute to the M-current in brain. The polypeptide is Potassium voltage-gated channel subfamily KQT member 3 (Rattus norvegicus (Rat)).